A 138-amino-acid polypeptide reads, in one-letter code: Large ribosomal subunit protein bL19 (138 aa).

This sequence belongs to the bacterial ribosomal protein bL19 family.

Its function is as follows. This protein is located at the 30S-50S ribosomal subunit interface and may play a role in the structure and function of the aminoacyl-tRNA binding site. This is Large ribosomal subunit protein bL19 (rplS) from Rickettsia prowazekii (strain Madrid E).